Consider the following 275-residue polypeptide: MAVIKCKPTSPGRRHLVKVVNSDLHKGKPFAGLLAKKSKSGGRNNTGRITVRHIGGGHKQHYRLIDFKRNKDGIPAKVERLEYDPNRTANIALVLYADGERRYILAAKGMKAGDKIQSGIDAEIKSGNALPLRNIPVGSVVHAVEMKPAKGAQIARSAGAYVQVIARDGAYATLRLRSGEMRKVPVDCRATLGEVGNAEHMLRQLGKAGAKRWRGVRPTVRGVAMNPVDHPHGGGEGRTSGGRHPVSPWGQPTKGYKTRSNKRTDKYIVRRRNKK.

Positions 223 to 275 are disordered; it reads VAMNPVDHPHGGGEGRTSGGRHPVSPWGQPTKGYKTRSNKRTDKYIVRRRNKK.

This sequence belongs to the universal ribosomal protein uL2 family. Part of the 50S ribosomal subunit. Forms a bridge to the 30S subunit in the 70S ribosome.

In terms of biological role, one of the primary rRNA binding proteins. Required for association of the 30S and 50S subunits to form the 70S ribosome, for tRNA binding and peptide bond formation. It has been suggested to have peptidyltransferase activity; this is somewhat controversial. Makes several contacts with the 16S rRNA in the 70S ribosome. The sequence is that of Large ribosomal subunit protein uL2 from Shewanella pealeana (strain ATCC 700345 / ANG-SQ1).